The primary structure comprises 71 residues: MKAVIFFCLLSVMVFTVIEAVKEEGTKPAEAARECAAKNKRCADWAGPWCCEGLYCSCRSYPGCMCRPNSG.

An N-terminal signal peptide occupies residues 1-20; the sequence is MKAVIFFCLLSVMVFTVIEA. Positions 21 to 33 are excised as a propeptide; that stretch reads VKEEGTKPAEAAR. 4 cysteine pairs are disulfide-bonded: cysteine 35–cysteine 51, cysteine 42–cysteine 56, cysteine 50–cysteine 66, and cysteine 58–cysteine 64. Position 70 is a serine amide (serine 70).

It belongs to the neurotoxin 07 (Beta/delta-agtx) family. 01 (aga-2) subfamily. In terms of tissue distribution, expressed by the venom gland.

It localises to the secreted. Functionally, insecticidal neurotoxin that modulates the insect Nav channel (DmNaV1/tipE (para/tipE)) in a unique manner, with both the activation and inactivation processes being affected. The voltage dependence of activation is shifted toward more hyperpolarized potentials (analogous to site 4 toxins) and a non-inactivating persistent sodium current is induced (site 3-like action). Interestingly, both effects take place in a voltage-dependent manner, producing a bell-shaped curve between -80 and 0 mV. Compared to beta/delta-agatoxin-1 to -3, this toxin appears to affect the insect sodium channel only weakly. The chain is U3-agatoxin-Ao1a from Agelena orientalis (Funnel-web spider).